The chain runs to 428 residues: ATP-dependent RNA helicase RhlB (428 aa).

The Q motif signature appears at 9–37 (QKFSDFALHPLVLEALEKKGFQHCTPIQA). In terms of domain architecture, Helicase ATP-binding spans 40–219 (LPLTLSGRDV…FEQMNNAEYV (180 aa)). ATP is bound at residue 53-60 (AQTGTGKT). The DEAD box motif lies at 165-168 (DEAD). A Helicase C-terminal domain is found at 245–390 (RLLQTLIEEE…VSKYNSDALL (146 aa)). The interval 392–428 (DLPAPKRLARPRGGNGPRRNSAPRRGGAPRNNRKRSG) is disordered. The span at 408-421 (PRRNSAPRRGGAPR) shows a compositional bias: low complexity.

Belongs to the DEAD box helicase family. RhlB subfamily. As to quaternary structure, component of the RNA degradosome, which is a multiprotein complex involved in RNA processing and mRNA degradation.

It is found in the cytoplasm. It catalyses the reaction ATP + H2O = ADP + phosphate + H(+). In terms of biological role, DEAD-box RNA helicase involved in RNA degradation. Has RNA-dependent ATPase activity and unwinds double-stranded RNA. This chain is ATP-dependent RNA helicase RhlB, found in Serratia proteamaculans (strain 568).